The chain runs to 884 residues: E3 SUMO-protein ligase SIZ1 (884 aa).

In terms of domain architecture, SAP spans 11–45 (LSYFRIKELKDVLTQLGLSKQGKKQELVDRILTLL). The interval 84-103 (LASKGQVSSDTSNLKVKGEP) is disordered. Residues 88–97 (GQVSSDTSNL) are compositionally biased toward polar residues. Residue Lys-100 forms a Glycyl lysine isopeptide (Lys-Gly) (interchain with G-Cter in SUMO) linkage. Residues 112-168 (KVRCVCGNSLETDSMIQCEDPRCHVWQHVGCVILPDKPMDGNPPLPESFYCEICRLT) form a PHD-type zinc finger. The segment at 346 to 429 (SDSDIEVVAD…FNRITSKMKH (84 aa)) adopts an SP-RING-type zinc-finger fold. Residues Cys-379, His-381, Cys-402, and Cys-405 each coordinate Zn(2+). Lys-488 is covalently cross-linked (Glycyl lysine isopeptide (Lys-Gly) (interchain with G-Cter in SUMO)). Disordered regions lie at residues 753–778 (PSLQIFLPTKPDASAQSGFKNQADMS), 792–824 (GDSASGNHGDPATTNGINSSHQMSTREGSMDTT), and 836–869 (DSRQDKAKKQRSDNPFSFPRQKRSNNEQDHQTRH). Composition is skewed to polar residues over residues 766–778 (SAQSGFKNQADMS) and 803–824 (ATTNGINSSHQMSTREGSMDTT). Residues 837–847 (SRQDKAKKQRS) show a composition bias toward basic and acidic residues.

Belongs to the PIAS family. As to quaternary structure, interacts (via PHD domain) with SCE1, GTE3 and GTE5. In terms of processing, autosumoylated at Lys-100 and Lys-488. As to expression, ubiquitous.

The protein localises to the nucleus speckle. It functions in the pathway protein modification; protein sumoylation. E3 SUMO protein ligase involved in regulation processes. Mediates SUMO/ attachment to PHR1, a MYB transcriptional activator controlling the phosphate deficiency responses. Functions as an upstream negative regulator of salicylic acid (SA) accumulation and subsequent SA-mediated systemic acquired resistance (SAR) signaling. Probably not involved in jasmonic acid (JA)-mediated defense response. Participates in abiotic stress-induced sumoylation. Controls heat shock-induced SUMO1 and SUMO2 conjugation and facilitates basal thermotolerance. Involved in freezing tolerance by mediating sumoylation of ICE1, a transcription activator of the cold signaling regulator CBF3/DREB1A. Acts as a positive regulator of drought stress tolerance. Acts as a floral repressor that promotes FLC expression by repressing FLD activity through sumoylation. Acts as a negative regulator of abscisic acid (ABA) signaling through ABI5 sumoylation. Mediates sumoylation of SCE1, GTE3 and GTE5. Functions as a negative regulator of SnRK1 signaling through sumoylation of several components of the SnRK1 complex. This Arabidopsis thaliana (Mouse-ear cress) protein is E3 SUMO-protein ligase SIZ1.